Reading from the N-terminus, the 151-residue chain is Sec-independent protein translocase protein TatB (151 aa).

Residues 1 to 21 form a helical membrane-spanning segment; the sequence is MFDVSFTELMVIGVIALVVIG. Residues 66 to 151 form a disordered region; it reads MDETARSMQT…DKTPPTGSAT (86 aa). A compositionally biased stretch (basic and acidic residues) spans 93–103; sequence AELDDTARDAS. Composition is skewed to low complexity over residues 109–122 and 133–151; these read ADAP…VASD and APPA…GSAT.

Belongs to the TatB family. The Tat system comprises two distinct complexes: a TatABC complex, containing multiple copies of TatA, TatB and TatC subunits, and a separate TatA complex, containing only TatA subunits. Substrates initially bind to the TatABC complex, which probably triggers association of the separate TatA complex to form the active translocon.

Its subcellular location is the cell inner membrane. Its function is as follows. Part of the twin-arginine translocation (Tat) system that transports large folded proteins containing a characteristic twin-arginine motif in their signal peptide across membranes. Together with TatC, TatB is part of a receptor directly interacting with Tat signal peptides. TatB may form an oligomeric binding site that transiently accommodates folded Tat precursor proteins before their translocation. The polypeptide is Sec-independent protein translocase protein TatB (Bordetella parapertussis (strain 12822 / ATCC BAA-587 / NCTC 13253)).